We begin with the raw amino-acid sequence, 207 residues long: ATP-dependent Clp protease proteolytic subunit (207 aa).

Catalysis depends on S111, which acts as the Nucleophile. H136 is a catalytic residue.

It belongs to the peptidase S14 family. Fourteen ClpP subunits assemble into 2 heptameric rings which stack back to back to give a disk-like structure with a central cavity, resembling the structure of eukaryotic proteasomes.

Its subcellular location is the cytoplasm. The catalysed reaction is Hydrolysis of proteins to small peptides in the presence of ATP and magnesium. alpha-casein is the usual test substrate. In the absence of ATP, only oligopeptides shorter than five residues are hydrolyzed (such as succinyl-Leu-Tyr-|-NHMec, and Leu-Tyr-Leu-|-Tyr-Trp, in which cleavage of the -Tyr-|-Leu- and -Tyr-|-Trp bonds also occurs).. Functionally, cleaves peptides in various proteins in a process that requires ATP hydrolysis. Has a chymotrypsin-like activity. Plays a major role in the degradation of misfolded proteins. This is ATP-dependent Clp protease proteolytic subunit from Yersinia enterocolitica serotype O:8 / biotype 1B (strain NCTC 13174 / 8081).